We begin with the raw amino-acid sequence, 283 residues long: Bifunctional protein FolD (283 aa).

Residues 164–166 (GRS), Ser-189, and Ile-230 each bind NADP(+).

Belongs to the tetrahydrofolate dehydrogenase/cyclohydrolase family. As to quaternary structure, homodimer.

It catalyses the reaction (6R)-5,10-methylene-5,6,7,8-tetrahydrofolate + NADP(+) = (6R)-5,10-methenyltetrahydrofolate + NADPH. The catalysed reaction is (6R)-5,10-methenyltetrahydrofolate + H2O = (6R)-10-formyltetrahydrofolate + H(+). The protein operates within one-carbon metabolism; tetrahydrofolate interconversion. Catalyzes the oxidation of 5,10-methylenetetrahydrofolate to 5,10-methenyltetrahydrofolate and then the hydrolysis of 5,10-methenyltetrahydrofolate to 10-formyltetrahydrofolate. The sequence is that of Bifunctional protein FolD from Lacticaseibacillus paracasei (strain ATCC 334 / BCRC 17002 / CCUG 31169 / CIP 107868 / KCTC 3260 / NRRL B-441) (Lactobacillus paracasei).